Here is a 337-residue protein sequence, read N- to C-terminus: tRNA N6-adenosine threonylcarbamoyltransferase (337 aa).

Residues H114 and H118 each coordinate Fe cation. Residues 136–140 (LVSGG), D169, G182, D186, and N275 contribute to the substrate site. D301 lines the Fe cation pocket.

The protein belongs to the KAE1 / TsaD family. Fe(2+) is required as a cofactor.

It localises to the cytoplasm. It carries out the reaction L-threonylcarbamoyladenylate + adenosine(37) in tRNA = N(6)-L-threonylcarbamoyladenosine(37) in tRNA + AMP + H(+). Required for the formation of a threonylcarbamoyl group on adenosine at position 37 (t(6)A37) in tRNAs that read codons beginning with adenine. Is involved in the transfer of the threonylcarbamoyl moiety of threonylcarbamoyl-AMP (TC-AMP) to the N6 group of A37, together with TsaE and TsaB. TsaD likely plays a direct catalytic role in this reaction. The protein is tRNA N6-adenosine threonylcarbamoyltransferase of Streptococcus thermophilus (strain CNRZ 1066).